The chain runs to 73 residues: UPF0057 membrane protein At4g30650 (73 aa).

The next 2 membrane-spanning stretches (helical) occupy residues 4–24 and 37–57; these read NMEV…GVCL and LVLT…VIVF.

The protein belongs to the UPF0057 (PMP3) family.

It is found in the membrane. This Arabidopsis thaliana (Mouse-ear cress) protein is UPF0057 membrane protein At4g30650.